A 342-amino-acid chain; its full sequence is Dihydroorotase (342 aa).

His13 and His15 together coordinate Zn(2+). Substrate contacts are provided by residues 15-17 (HLR) and Asn41. Residues Lys98, His135, and His173 each coordinate Zn(2+). The residue at position 98 (Lys98) is an N6-carboxylysine. His135 provides a ligand contact to substrate. Leu218 serves as a coordination point for substrate. Position 246 (Asp246) interacts with Zn(2+). The active site involves Asp246. His250 and Ala262 together coordinate substrate.

This sequence belongs to the metallo-dependent hydrolases superfamily. DHOase family. Class II DHOase subfamily. Homodimer. Requires Zn(2+) as cofactor.

The catalysed reaction is (S)-dihydroorotate + H2O = N-carbamoyl-L-aspartate + H(+). Its pathway is pyrimidine metabolism; UMP biosynthesis via de novo pathway; (S)-dihydroorotate from bicarbonate: step 3/3. In terms of biological role, catalyzes the reversible cyclization of carbamoyl aspartate to dihydroorotate. The protein is Dihydroorotase of Vibrio vulnificus (strain CMCP6).